Reading from the N-terminus, the 347-residue chain is UDP-N-acetylenolpyruvoylglucosamine reductase (347 aa).

Positions 15–187 (FGIEQTCSYL…TAIGLKLPKR (173 aa)) constitute an FAD-binding PCMH-type domain. Arginine 163 is an active-site residue. Catalysis depends on serine 233, which acts as the Proton donor. Glutamate 328 is a catalytic residue.

The protein belongs to the MurB family. Requires FAD as cofactor.

It is found in the cytoplasm. The catalysed reaction is UDP-N-acetyl-alpha-D-muramate + NADP(+) = UDP-N-acetyl-3-O-(1-carboxyvinyl)-alpha-D-glucosamine + NADPH + H(+). Its pathway is cell wall biogenesis; peptidoglycan biosynthesis. Cell wall formation. The protein is UDP-N-acetylenolpyruvoylglucosamine reductase of Vibrio parahaemolyticus serotype O3:K6 (strain RIMD 2210633).